A 492-amino-acid chain; its full sequence is Solute carrier family 2, facilitated glucose transporter member 1 (492 aa).

M1 carries the post-translational modification N-acetylmethionine. The Cytoplasmic portion of the chain corresponds to 1-11 (MEPSSKKVTGR). Residues 12-33 (LMLAVGGAVLGSLQFGYNTGVI) form a helical membrane-spanning segment. The Extracellular segment spans residues 34-66 (NAPQKVIEEFYNQTWNHRYGESIPSTTLTTLWS). N45 carries N-linked (GlcNAc...) asparagine glycosylation. Residues 67–87 (LSVAIFSVGGMIGSFSVGLFV) traverse the membrane as a helical segment. Over 88-90 (NRF) the chain is Cytoplasmic. A helical transmembrane segment spans residues 91–112 (GRRNSMLMMNLLAFVSAVLMGF). Residues 113–120 (SKLGKSFE) lie on the Extracellular side of the membrane. A helical membrane pass occupies residues 121 to 144 (MLILGRFIIGVYCGLTTGFVPMYV). The Cytoplasmic portion of the chain corresponds to 145–155 (GEVSPTALRGA). A helical membrane pass occupies residues 156 to 176 (LGTLHQLGIVVGILIAQVFGL). A D-glucose-binding site is contributed by Q161. At 177 to 185 (DSIMGNADL) the chain is on the extracellular side. The helical transmembrane segment at 186 to 206 (WPLLLSVIFIPALLQCILLPF) threads the bilayer. The Cytoplasmic portion of the chain corresponds to 207 to 271 (CPESPRFLLI…LFRSPAYRQP (65 aa)). Position 226 is a phosphoserine (S226). The chain crosses the membrane as a helical span at residues 272 to 293 (ILIAVVLQLSQQLSGINAVFYY). D-glucose-binding positions include 282 to 283 (QQ) and N288. At 294 to 306 (STSIFEKAGVQQP) the chain is on the extracellular side. A helical membrane pass occupies residues 307–328 (VYATIGSGIVNTAFTVVSLFVV). A D-glucose-binding site is contributed by N317. The Cytoplasmic segment spans residues 329 to 334 (ERAGRR). The helical transmembrane segment at 335–355 (TLHLIGLAGMAGCAVLMTIAL) threads the bilayer. The Extracellular portion of the chain corresponds to 356–365 (ALLEQLPWMS). A helical membrane pass occupies residues 366 to 388 (YLSIVAIFGFVAFFEVGPGPIPW). D-glucose-binding residues include E380 and W388. Over 389–401 (FIVAELFSQGPRP) the chain is Cytoplasmic. A helical transmembrane segment spans residues 402–422 (AAVAVAGFSNWTSNFIVGMCF). Residues 423-429 (QYVEQLC) are Extracellular-facing. Residues 430–450 (GPYVFIIFTVLLVLFFIFTYF) form a helical membrane-spanning segment. Residues 451–492 (KVPETKGRTFDEIASGFRQGGASQSDKTPEELFHPLGADSQV) are Cytoplasmic-facing. The residue at position 465 (S465) is a Phosphoserine. The disordered stretch occupies residues 468 to 492 (RQGGASQSDKTPEELFHPLGADSQV). T478 bears the Phosphothreonine mark. S490 is modified (phosphoserine).

The protein belongs to the major facilitator superfamily. Sugar transporter (TC 2.A.1.1) family. Glucose transporter subfamily. Found in a complex with ADD2, DMTN and SLC2A1. Interacts (via C-terminus cytoplasmic region) with DMTN. Interacts with SNX27; the interaction is required when endocytosed to prevent degradation in lysosomes and promote recycling to the plasma membrane. Interacts with STOM. Interacts with GIPC (via PDZ domain). Interacts with SGTA (via Gln-rich region). Interacts with isoform 1 of BSG. Interacts with SMIM43; the interaction may promote SLC2A1-mediated glucose transport to meet the energy needs of mesendoderm differentiation. Post-translationally, phosphorylation at Ser-226 by PKC promotes glucose uptake by increasing cell membrane localization. In terms of tissue distribution, detected in osteoblastic cells (at protein level). Detected in brain, and at lower levels in kidney, heart and lung.

It localises to the cell membrane. Its subcellular location is the photoreceptor inner segment. It catalyses the reaction D-glucose(out) = D-glucose(in). With respect to regulation, the uptake of glucose is inhibited by cytochalasin B. Glucose uptake is increased in response to phorbol ester 12-O-tetradecanoylphorbol-13-acetate (TPA) treatment: TPA-induced glucose uptake requires phosphorylation at Ser-226. Its function is as follows. Facilitative glucose transporter, which is responsible for constitutive or basal glucose uptake. Has a very broad substrate specificity; can transport a wide range of aldoses including both pentoses and hexoses. Most important energy carrier of the brain: present at the blood-brain barrier and assures the energy-independent, facilitative transport of glucose into the brain. In association with BSG and NXNL1, promotes retinal cone survival by increasing glucose uptake into photoreceptors. Required for mesendoderm differentiation. The polypeptide is Solute carrier family 2, facilitated glucose transporter member 1 (Rattus norvegicus (Rat)).